Consider the following 1111-residue polypeptide: Putative leucine--tRNA ligase, cytoplasmic (1111 aa).

The 'HIGH' region signature appears at 74 to 84 (PYMNGALHLGH). Ser460 is subject to Phosphoserine. The short motif at 737-741 (KMSKS) is the 'KMSKS' region element. Lys740 serves as a coordination point for ATP.

The protein belongs to the class-I aminoacyl-tRNA synthetase family.

The protein localises to the cytoplasm. It carries out the reaction tRNA(Leu) + L-leucine + ATP = L-leucyl-tRNA(Leu) + AMP + diphosphate. In Schizosaccharomyces pombe (strain 972 / ATCC 24843) (Fission yeast), this protein is Putative leucine--tRNA ligase, cytoplasmic (lrs1).